Reading from the N-terminus, the 332-residue chain is DNA-directed RNA polymerase subunit alpha (332 aa).

Positions 1–234 are alpha N-terminal domain (alpha-NTD); sequence MTVTVSQVLR…DQLSVFGDFT (234 aa). Residues 248-332 are alpha C-terminal domain (alpha-CTD); the sequence is VDPVLLRPID…PGVSQYGMLG (85 aa).

It belongs to the RNA polymerase alpha chain family. Homodimer. The RNAP catalytic core consists of 2 alpha, 1 beta, 1 beta' and 1 omega subunit. When a sigma factor is associated with the core the holoenzyme is formed, which can initiate transcription.

It carries out the reaction RNA(n) + a ribonucleoside 5'-triphosphate = RNA(n+1) + diphosphate. DNA-dependent RNA polymerase catalyzes the transcription of DNA into RNA using the four ribonucleoside triphosphates as substrates. This is DNA-directed RNA polymerase subunit alpha from Xylella fastidiosa (strain M23).